The following is a 30-amino-acid chain: Cycloviolacin-O1 (30 aa).

The cyclopeptide (Gly-Asn) cross-link spans 1-30 (GIPCAESCVYIPCTVTALLGCSCSNRVCYN). Intrachain disulfides connect C4–C21, C8–C23, and C13–C28.

Post-translationally, this is a cyclic peptide. In terms of tissue distribution, expressed in leaves, petals, petioles and roots but not in runners (at protein level).

Functionally, probably participates in a plant defense mechanism. This chain is Cycloviolacin-O1, found in Viola odorata (Sweet violet).